The chain runs to 665 residues: Golgi-associated RAB2B interactor protein 3 (665 aa).

Disordered regions lie at residues 211–240 (EIRG…AGGE), 272–296 (AAAG…GTAG), and 480–590 (SEGY…GSVS). Residues 219–232 (NSRPQSSPTVSEAT) show a composition bias toward polar residues. Over residues 499–513 (EAKEKRERREKDRTS) the composition is skewed to basic and acidic residues. Composition is skewed to basic residues over residues 514–538 (SRKS…RKTS) and 554–566 (GHGR…HSSS). Positions 515 to 531 (RKSSHHRRTGMSRHSSK) match the Bipartite nuclear localization signal motif. At serine 652 the chain carries Phosphoserine.

Belongs to the GARIN family. As to quaternary structure, interacts (via N-terminus) with RAB2B (in GTP-bound form). Interacts with FRG1. As to expression, expressed in adult spermatocytes and spermatids.

The protein resides in the golgi apparatus. The protein localises to the nucleus. Its subcellular location is the cajal body. May be involved in RNA biogenesis. This Mus musculus (Mouse) protein is Golgi-associated RAB2B interactor protein 3.